A 501-amino-acid chain; its full sequence is ATP synthase subunit alpha (501 aa).

169–176 is an ATP binding site; sequence GDRQTGKT.

It belongs to the ATPase alpha/beta chains family. F-type ATPases have 2 components, CF(1) - the catalytic core - and CF(0) - the membrane proton channel. CF(1) has five subunits: alpha(3), beta(3), gamma(1), delta(1), epsilon(1). CF(0) has three main subunits: a(1), b(2) and c(9-12). The alpha and beta chains form an alternating ring which encloses part of the gamma chain. CF(1) is attached to CF(0) by a central stalk formed by the gamma and epsilon chains, while a peripheral stalk is formed by the delta and b chains.

The protein resides in the cell membrane. It catalyses the reaction ATP + H2O + 4 H(+)(in) = ADP + phosphate + 5 H(+)(out). Produces ATP from ADP in the presence of a proton gradient across the membrane. The alpha chain is a regulatory subunit. The chain is ATP synthase subunit alpha from Streptococcus pyogenes serotype M2 (strain MGAS10270).